We begin with the raw amino-acid sequence, 75 residues long: Small ribosomal subunit protein bS16c (75 aa).

This sequence belongs to the bacterial ribosomal protein bS16 family.

Its subcellular location is the plastid. The protein resides in the chloroplast. The polypeptide is Small ribosomal subunit protein bS16c (Cyanidium caldarium (Red alga)).